The chain runs to 141 residues: Large ribosomal subunit protein uL11 (141 aa).

The protein belongs to the universal ribosomal protein uL11 family. In terms of assembly, part of the ribosomal stalk of the 50S ribosomal subunit. Interacts with L10 and the large rRNA to form the base of the stalk. L10 forms an elongated spine to which L12 dimers bind in a sequential fashion forming a multimeric L10(L12)X complex. In terms of processing, one or more lysine residues are methylated.

In terms of biological role, forms part of the ribosomal stalk which helps the ribosome interact with GTP-bound translation factors. In Nautilia profundicola (strain ATCC BAA-1463 / DSM 18972 / AmH), this protein is Large ribosomal subunit protein uL11.